The following is a 217-amino-acid chain: Ribonuclease HII (217 aa).

Residues 34-217 (WPVAGTDEAG…RMSFRPLKRD (184 aa)) form the RNase H type-2 domain. Positions 40, 41, and 131 each coordinate a divalent metal cation.

The protein belongs to the RNase HII family. Requires Mn(2+) as cofactor. Mg(2+) is required as a cofactor.

It is found in the cytoplasm. It carries out the reaction Endonucleolytic cleavage to 5'-phosphomonoester.. Endonuclease that specifically degrades the RNA of RNA-DNA hybrids. The chain is Ribonuclease HII from Agrobacterium fabrum (strain C58 / ATCC 33970) (Agrobacterium tumefaciens (strain C58)).